Reading from the N-terminus, the 278-residue chain is Orotidine 5'-phosphate decarboxylase (278 aa).

Residues Asp40, 62 to 64 (KTH), 93 to 102 (DRKFIDIGNT), Tyr228, and Arg246 contribute to the substrate site. The active-site Proton donor is Lys95.

It belongs to the OMP decarboxylase family.

It carries out the reaction orotidine 5'-phosphate + H(+) = UMP + CO2. Its pathway is pyrimidine metabolism; UMP biosynthesis via de novo pathway; UMP from orotate: step 2/2. The protein is Orotidine 5'-phosphate decarboxylase (PYR1) of Passalora fulva (Tomato leaf mold).